The chain runs to 1013 residues: Poly [ADP-ribose] polymerase 1 (1013 aa).

Position 2 is an N-acetylalanine (A2). A PARP-type 1 zinc finger spans residues Y9–G93. Positions 21 and 24 each coordinate Zn(2+). The residue at position 41 (S41) is a Phosphoserine. Zn(2+)-binding residues include H53 and C56. 2 positions are modified to N6-acetyllysine: K97 and K105. The segment at F113–K203 adopts a PARP-type 2 zinc-finger fold. Zn(2+) is bound by residues C125 and C128. N6-acetyllysine is present on K131. Positions 159 and 162 each coordinate Zn(2+). Phosphoserine occurs at positions 177, 179, and 185. A Glycyl lysine isopeptide (Lys-Gly) (interchain with G-Cter in SUMO2) cross-link involves residue K192. The disordered stretch occupies residues Q198–K233. K203 is covalently cross-linked (Glycyl lysine isopeptide (Lys-Gly) (interchain with G-Cter in SUMO1); alternate). Residue K203 forms a Glycyl lysine isopeptide (Lys-Gly) (interchain with G-Cter in SUMO2); alternate linkage. 2 short sequence motifs (nuclear localization signal) span residues K207–K209 and K221–K226. In terms of domain architecture, PADR1 zinc-binding spans K225–P359. Residue K249 forms a Glycyl lysine isopeptide (Lys-Gly) (interchain with G-Cter in SUMO2) linkage. S274 and S277 each carry phosphoserine. The segment at G290 to E332 is zinc ribbon. Zn(2+)-binding residues include C295, C298, C311, and C321. Residues F357 to S383 form a disordered region. Positions S372 to S383 are enriched in polar residues. Residues V373 to K523 form an automodification domain region. A BRCT domain is found at P385 to H476. At D387 the chain carries PolyADP-ribosyl aspartic acid. Residues E407, E413, E435, E437, E444, E445, and E456 each carry the polyADP-ribosyl glutamic acid modification. Residue K467 forms a Glycyl lysine isopeptide (Lys-Gly) (interchain with G-Cter in SUMO2) linkage. PolyADP-ribosyl glutamic acid occurs at positions 471 and 484. K486 participates in a covalent cross-link: Glycyl lysine isopeptide (Lys-Gly) (interchain with G-Cter in SUMO1); alternate. Residue K486 forms a Glycyl lysine isopeptide (Lys-Gly) (interchain with G-Cter in SUMO2); alternate linkage. E488 and E491 each carry polyADP-ribosyl glutamic acid. The tract at residues P495 to N516 is disordered. ADP-ribosylserine is present on residues S499, S503, and S506. A Glycyl lysine isopeptide (Lys-Gly) (interchain with G-Cter in SUMO2) cross-link involves residue K511. PolyADP-ribosyl glutamic acid occurs at positions 512 and 513. S518 is modified (ADP-ribosylserine). PolyADP-ribosyl glutamic acid is present on E519. K520 carries the post-translational modification N6-(ADP-ribosyl)lysine. K527 is covalently cross-linked (Glycyl lysine isopeptide (Lys-Gly) (interchain with G-Cter in SUMO2)). A WGR domain is found at S541 to F637. The residue at position 593 (T593) is a Phosphothreonine. N6-acetyllysine occurs at positions 599 and 620. The region spanning K661 to R778 is the PARP alpha-helical domain. K747 participates in a covalent cross-link: Glycyl lysine isopeptide (Lys-Gly) (interchain with G-Cter in SUMO1); alternate. K747 participates in a covalent cross-link: Glycyl lysine isopeptide (Lys-Gly) (interchain with G-Cter in SUMO2); alternate. A phosphoserine mark is found at S781 and S785. Residues D787–W1013 form the PARP catalytic domain. Residues H861–S863, G870, R877, and S903 contribute to the NAD(+) site. The active-site For poly [ADP-ribose] polymerase activity is the E987.

It belongs to the ARTD/PARP family. As to quaternary structure, homodimer; PARP-type zinc-fingers from separate PARP1 molecules form a dimer module that specifically recognizes DNA strand breaks. Heterodimer; heterodimerizes with PARP2. Interacts (via the PARP catalytic domain) with HPF1. Interacts with NMNAT1. Interacts with nucleosomes; with a preference for nucleosomes containing H2A.X. Interacts with APTX. Component of a base excision repair (BER) complex, containing at least XRCC1, PARP1, PARP2, POLB and LRIG3. Interacts with SRY. The SWAP complex consists of NPM1, NCL, PARP1 and SWAP70. Interacts with TIAM2. Interacts with PARP3; leading to activate PARP1 in absence of DNA. Interacts (when poly-ADP-ribosylated) with CHD1L (via macro domain). Interacts with the DNA polymerase alpha catalytic subunit POLA1; this interaction functions as part of the control of replication fork progression. Interacts with EEF1A1 and TXK. Interacts with RNF4. Interacts with RNF146. Interacts with ZNF423. Interacts with APLF. Interacts with SNAI1 (via zinc fingers); the interaction requires SNAI1 to be poly-ADP-ribosylated and non-phosphorylated (active) by GSK3B. Interacts (when poly-ADP-ribosylated) with PARP9. Interacts with NR4A3; activates PARP1 by improving acetylation of PARP1 and suppressing the interaction between PARP1 and SIRT1. Interacts (via catalytic domain) with PUM3; the interaction inhibits the poly-ADP-ribosylation activity of PARP1 and the degradation of PARP1 by CASP3 following genotoxic stress. Interacts with ZNF365. Interacts with RRP1B. Interacts with TIMELESS; the interaction is direct. Interacts with CGAS; leading to impede the formation of the PARP1-TIMELESS complex. Interacts with KHDC3L, the interaction is increased following the formation of DNA double-strand breaks. Interacts (when auto-poly-ADP-ribosylated) with XRCC1; leading to inhibit PARP1 ADP-ribosyltransferase activity. Interacts with SPINDOC; promoting PARP1 ADP-ribosyltransferase activity. Interacts with BANF1; leading to inhibit PARP1 ADP-ribosyltransferase activity in response to oxidative DNA damage. Interacts (when sumoylated and ubiquitinated) with VCP/p97; leading to its extraction from chromatin. Interacts with YARS1; promoting PARP1 ADP-ribosyltransferase activity. Interacts with PACMP micropeptide; Interacts with PACMP micropeptide; interaction. Interacts (when poly-ADP-ribosylated) with isoform 1 of MACROH2A1; MACROH2A1 specifically binds to poly-ADP-ribose chains and inhibits PARP1 activity, limiting the consumption of nuclear NAD(+). Interacts with CARM1; promoting recruitment to replication forks. Interacts with RECQL. Interacts with ZNF32; the interaction reshapes ZNF432 interacting proteins. Interacts with TPRN; TPRN interacts with a number of DNA damage response proteins, is recruited to sites of DNA damage and may play a role in DNA damage repair. Interacts (when auto-poly-ADP-ribosylated) with AIFM1. In terms of processing, poly-ADP-ribosylated on serine, glutamate and aspartate residues by autocatalysis. Auto-ADP-ribosylation on serine takes place following interaction with HPF1. Auto poly-ADP-ribosylation on serine residues promotes its dissociation from chromatin. Poly-ADP-ribosylated by PARP2; poly-ADP-ribosylation mediates the recruitment of CHD1L to DNA damage sites. Mono-ADP-ribosylated at Lys-520 by SIRT6 in response to oxidative stress, promoting recruitment to double-strand breaks (DSBs) sites. S-nitrosylated, leading to inhibit transcription regulation activity. Post-translationally, phosphorylated at Thr-593 by PRKDC in response to DNA damage following virus infection, promoting its translocation to the cytosol. Phosphorylated by TXK. In terms of processing, proteolytically cleaved by caspase-3 (CASP3) and caspase-7 (CASP7) in response to apoptosis to generate the Poly [ADP-ribose] polymerase 1, processed N-terminus and Poly [ADP-ribose] polymerase 1, processed C-terminus forms. Sumoylated with SUMO1 or SUMO2 by PIAS4 following prolonged residence (trapping) to chromatin. Sumoylation promotes ubiquitination by RNF4 and removal from chromatin by VCP/p97. Post-translationally, ubiquitinated by RNF4 following sumoylation by PIAS4 in response to prolonged residence (trapping) to chromatin. Ubiquitination promotes removal from chromatin by VCP/p97.

The protein localises to the chromosome. It localises to the nucleus. The protein resides in the nucleolus. Its subcellular location is the cytoplasm. It is found in the cytosol. The catalysed reaction is NAD(+) + (ADP-D-ribosyl)n-acceptor = nicotinamide + (ADP-D-ribosyl)n+1-acceptor + H(+).. It carries out the reaction L-seryl-[protein] + NAD(+) = O-(ADP-D-ribosyl)-L-seryl-[protein] + nicotinamide + H(+). The enzyme catalyses L-aspartyl-[protein] + NAD(+) = 4-O-(ADP-D-ribosyl)-L-aspartyl-[protein] + nicotinamide. It catalyses the reaction L-glutamyl-[protein] + NAD(+) = 5-O-(ADP-D-ribosyl)-L-glutamyl-[protein] + nicotinamide. The catalysed reaction is L-tyrosyl-[protein] + NAD(+) = O-(ADP-D-ribosyl)-L-tyrosyl-[protein] + nicotinamide + H(+). It carries out the reaction L-histidyl-[protein] + NAD(+) = N(tele)-(ADP-D-ribosyl)-L-histidyl-[protein] + nicotinamide + H(+). With respect to regulation, ADP-ribosyltransferase activity is regulated via an allosteric activation mechanism. In absence of activation signal, PARP1 is autoinhibited by the PARP alpha-helical domain (also named HD region), which prevents effective NAD(+)-binding. Activity is highly stimulated by signals, such as DNA strand breaks. Binding to damaged DNA unfolds the PARP alpha-helical domain, relieving autoinhibition. Poly-ADP-ribosyltransferase activity is tightly regulated and PARP1 is removed from damaged chromatin following initial poly-ADP-ribosylation of chromatin to avoid prolonged residence (trapping) that has cytotoxic consequences. A number of factors (VCP/p97) or post-translational modifications (auto-poly-ADP-ribosylation or ubiquitination) promote PARP1 removal from chromatin. Its function is as follows. Poly-ADP-ribosyltransferase that mediates poly-ADP-ribosylation of proteins and plays a key role in DNA repair. Mediates glutamate, aspartate, serine, histidine or tyrosine ADP-ribosylation of proteins: the ADP-D-ribosyl group of NAD(+) is transferred to the acceptor carboxyl group of target residues and further ADP-ribosyl groups are transferred to the 2'-position of the terminal adenosine moiety, building up a polymer with an average chain length of 20-30 units. Serine ADP-ribosylation of proteins constitutes the primary form of ADP-ribosylation of proteins in response to DNA damage. Specificity for the different amino acids is conferred by interacting factors, such as HPF1 and NMNAT1. Following interaction with HPF1, catalyzes serine ADP-ribosylation of target proteins; HPF1 confers serine specificity by completing the PARP1 active site. Also catalyzes tyrosine ADP-ribosylation of target proteins following interaction with HPF1. Following interaction with NMNAT1, catalyzes glutamate and aspartate ADP-ribosylation of target proteins; NMNAT1 confers glutamate and aspartate specificity. PARP1 initiates the repair of DNA breaks: recognizes and binds DNA breaks within chromatin and recruits HPF1, licensing serine ADP-ribosylation of target proteins, such as histones (H2BS6ADPr and H3S10ADPr), thereby promoting decompaction of chromatin and the recruitment of repair factors leading to the reparation of DNA strand breaks. HPF1 initiates serine ADP-ribosylation but restricts the polymerase activity of PARP1 in order to limit the length of poly-ADP-ribose chains. In addition to base excision repair (BER) pathway, also involved in double-strand breaks (DSBs) repair: together with TIMELESS, accumulates at DNA damage sites and promotes homologous recombination repair by mediating poly-ADP-ribosylation. Mediates the poly-ADP-ribosylation of a number of proteins, including itself, APLF, CHFR and NFAT5. In addition to proteins, also able to ADP-ribosylate DNA: catalyzes ADP-ribosylation of DNA strand break termini containing terminal phosphates and a 2'-OH group in single- and double-stranded DNA, respectively. Required for PARP9 and DTX3L recruitment to DNA damage sites. PARP1-dependent PARP9-DTX3L-mediated ubiquitination promotes the rapid and specific recruitment of 53BP1/TP53BP1, UIMC1/RAP80, and BRCA1 to DNA damage sites. PARP1-mediated DNA repair in neurons plays a role in sleep: senses DNA damage in neurons and promotes sleep, facilitating efficient DNA repair. In addition to DNA repair, also involved in other processes, such as transcription regulation, programmed cell death, membrane repair, adipogenesis and innate immunity. Acts as a repressor of transcription: binds to nucleosomes and modulates chromatin structure in a manner similar to histone H1, thereby altering RNA polymerase II. Acts both as a positive and negative regulator of transcription elongation, depending on the context. Acts as a positive regulator of transcription elongation by mediating poly-ADP-ribosylation of NELFE, preventing RNA-binding activity of NELFE and relieving transcription pausing. Acts as a negative regulator of transcription elongation in response to DNA damage by catalyzing poly-ADP-ribosylation of CCNT1, disrupting the phase separation activity of CCNT1 and subsequent activation of CDK9. Involved in replication fork progression following interaction with CARM1: mediates poly-ADP-ribosylation at replication forks, slowing fork progression. Poly-ADP-ribose chains generated by PARP1 also play a role in poly-ADP-ribose-dependent cell death, a process named parthanatos. Also acts as a negative regulator of the cGAS-STING pathway. Acts by mediating poly-ADP-ribosylation of CGAS: PARP1 translocates into the cytosol following phosphorylation by PRKDC and catalyzes poly-ADP-ribosylation and inactivation of CGAS. Acts as a negative regulator of adipogenesis: catalyzes poly-ADP-ribosylation of histone H2B on 'Glu-35' (H2BE35ADPr) following interaction with NMNAT1, inhibiting phosphorylation of H2B at 'Ser-36' (H2BS36ph), thereby blocking expression of pro-adipogenetic genes. Involved in the synthesis of ATP in the nucleus, together with NMNAT1, PARG and NUDT5. Nuclear ATP generation is required for extensive chromatin remodeling events that are energy-consuming. In terms of biological role, promotes AIFM1-mediated apoptosis. This form, which translocates into the cytoplasm following cleavage by caspase-3 (CASP3) and caspase-7 (CASP7) in response to apoptosis, is auto-poly-ADP-ribosylated and serves as a poly-ADP-ribose carrier to induce AIFM1-mediated apoptosis. Functionally, this cleavage form irreversibly binds to DNA breaks and interferes with DNA repair, promoting DNA damage-induced apoptosis. The chain is Poly [ADP-ribose] polymerase 1 (PARP1) from Cricetulus griseus (Chinese hamster).